The sequence spans 124 residues: Acidic phospholipase A2 BA2 (124 aa).

Cystine bridges form between Cys26/Cys116, Cys28/Cys44, Cys43/Cys95, Cys49/Cys124, Cys50/Cys88, Cys57/Cys81, and Cys75/Cys86. The Ca(2+) site is built by Tyr27, Gly29, and Gly31. His47 is a catalytic residue. Asp48 contacts Ca(2+). Asp89 is a catalytic residue.

This sequence belongs to the phospholipase A2 family. Group II subfamily. D49 sub-subfamily. The cofactor is Ca(2+). In terms of tissue distribution, expressed by the venom gland.

Its subcellular location is the secreted. It catalyses the reaction a 1,2-diacyl-sn-glycero-3-phosphocholine + H2O = a 1-acyl-sn-glycero-3-phosphocholine + a fatty acid + H(+). Functionally, PLA2 catalyzes the calcium-dependent hydrolysis of the 2-acyl groups in 3-sn-phosphoglycerides. In Gloydius halys (Chinese water mocassin), this protein is Acidic phospholipase A2 BA2.